We begin with the raw amino-acid sequence, 164 residues long: Lipoprotein signal peptidase (164 aa).

The next 4 membrane-spanning stretches (helical) occupy residues 6 to 26, 39 to 59, 65 to 85, and 88 to 108; these read LGIL…LWLL, VTSF…GWFA, GQIL…IWMA, and TTKL…GNAI. Catalysis depends on residues aspartate 118 and aspartate 140. A helical transmembrane segment spans residues 141 to 161; sequence VAIVVGVVALLYDSLIGAPAV.

The protein belongs to the peptidase A8 family.

It localises to the cell inner membrane. It catalyses the reaction Release of signal peptides from bacterial membrane prolipoproteins. Hydrolyzes -Xaa-Yaa-Zaa-|-(S,diacylglyceryl)Cys-, in which Xaa is hydrophobic (preferably Leu), and Yaa (Ala or Ser) and Zaa (Gly or Ala) have small, neutral side chains.. It functions in the pathway protein modification; lipoprotein biosynthesis (signal peptide cleavage). This protein specifically catalyzes the removal of signal peptides from prolipoproteins. The protein is Lipoprotein signal peptidase of Rhodopseudomonas palustris (strain TIE-1).